A 92-amino-acid chain; its full sequence is UPF0250 protein Avin_08440 (92 aa).

The protein belongs to the UPF0250 family.

The chain is UPF0250 protein Avin_08440 from Azotobacter vinelandii (strain DJ / ATCC BAA-1303).